Here is a 306-residue protein sequence, read N- to C-terminus: MELKDYYAIMGVKPTDDLKTIKTAYRRLARKYHPDVSKEPDAEARFKEVAEAWEVLSDEQRRAEYDQMWQHRNDPQFNRQFHHSDGQSFNAEDFDDIFSSIFGQHARQSRQRPATRGHDIEIEVAVFLEETLTEHKRTISYNLPVYNAFGMIEQEIPKTLNVKIPAGVGNGQRIRLKGQGTPGENGGPNGDLWLVIHIAPHPLFDIVGQDLEIVVPVSPWEAALGAKVTVPTLKESILLTIPPGSQAGQRLRVKGKGLVSKKQTGDLYAVLKIVMPPKPDENTAALWQQLADAQSSFDPRKDWGKA.

One can recognise a J domain in the interval 5 to 69 (DYYAIMGVKP…QRRAEYDQMW (65 aa)).

It localises to the cytoplasm. The protein localises to the nucleoid. Functionally, DNA-binding protein that preferentially recognizes a curved DNA sequence. It is probably a functional analog of DnaJ; displays overlapping activities with DnaJ, but functions under different conditions, probably acting as a molecular chaperone in an adaptive response to environmental stresses other than heat shock. Lacks autonomous chaperone activity; binds native substrates and targets them for recognition by DnaK. Its activity is inhibited by the binding of CbpM. This is Curved DNA-binding protein from Escherichia coli (strain 55989 / EAEC).